Reading from the N-terminus, the 861-residue chain is MTTSATSGTGPTANSMRRALKRARDGVALDVTEAAVLLQARGEDLDDLTASAARVRDAGLEAAGRAGVITYSKSVFIPLTRLCRDKCHYCTFVTVPGKLRRAGHGMFMSPDEVLDIARKGAALGCKEALITLGDKPEDRWPEAREWLDAHGYDDTIAYVRAISIRILEETGLLPHLNPGVMSWTDFQRLKPVAPSMGMMLETTATRLWSEPGGPHHGSPDKEPAVRLRVLEDAGRSSVPFTSGILIGIGETYEERAESLFALRKISRAYHGIQELIIQNFRAKPDTAMRGMPDAELDELIATVAVARHIMGPRACLQAPPNLVDSEYGRLIGAGIDDWGGVSPLTIDHVNPERPWPQIDLLREQSAQAGFELRERLCVYPEFVQRGEPWLDPRLLPHVRALADPASGLAHADATVEGHPWQEPEEAFVAQGRTDLHHSIDTEGRTGDRRDDFDVVYGDWEALREAAAPGMVPERIDTDVRQALATAANDPTRLTDAEALALLHADGPALDALTRIADDVRKAAVGDDVTYIVTRNINFTNVCYTGCRFCAFAQRRTDADAYTLSLEQVADRAQQAWDVGAVEVCMQGGIHPDLPGTAYFDIAKAVKERVPGMHVHAFSPMEVVNGATRTGLSIREWLTAAKEAGLDSIPGTAAEILDDEVRWVLTKGKLPTATWIEVITTAHELGIRSSSTMMYGHVDQPRHWLGHFRTLARIQQQTGGFTEFVTLPFIHTNAPVYLAGIARPGPTTRDNRAVMAMARLLLHPHIPNIQTSWVKLGTEGAAEMLRSGANDLGGTLMEETISRMAGSSYGSYKSVKDLIAVAEAAGRPAKPRTTLYGEVPQERQRAAAASDGHLPELLPVLD.

2 Radical SAM core domains span residues 69-319 (ITYS…LQAP) and 528-763 (VTYI…LLHP). Positions 70–401 (TYSKSVFIPL…PRLLPHVRAL (332 aa)) are cofG-like. 6 residues coordinate [4Fe-4S] cluster: C83, C87, C90, C542, C546, and C549. The tract at residues 505–838 (DGPALDALTR…KPRTTLYGEV (334 aa)) is cofH-like.

The protein in the N-terminal section; belongs to the radical SAM superfamily. CofG family. In the C-terminal section; belongs to the radical SAM superfamily. CofH family. [4Fe-4S] cluster is required as a cofactor.

The enzyme catalyses 5-amino-6-(D-ribitylamino)uracil + L-tyrosine + S-adenosyl-L-methionine = 5-amino-5-(4-hydroxybenzyl)-6-(D-ribitylimino)-5,6-dihydrouracil + 2-iminoacetate + 5'-deoxyadenosine + L-methionine + H(+). It catalyses the reaction 5-amino-5-(4-hydroxybenzyl)-6-(D-ribitylimino)-5,6-dihydrouracil + S-adenosyl-L-methionine = 7,8-didemethyl-8-hydroxy-5-deazariboflavin + 5'-deoxyadenosine + L-methionine + NH4(+) + H(+). It participates in cofactor biosynthesis; coenzyme F0 biosynthesis. Functionally, catalyzes the radical-mediated synthesis of 7,8-didemethyl-8-hydroxy-5-deazariboflavin (FO) from 5-amino-6-(D-ribitylamino)uracil and L-tyrosine. This Streptomyces avermitilis (strain ATCC 31267 / DSM 46492 / JCM 5070 / NBRC 14893 / NCIMB 12804 / NRRL 8165 / MA-4680) protein is FO synthase (fbiC).